Reading from the N-terminus, the 118-residue chain is T cell receptor gamma variable 8 (118 aa).

A signal peptide spans Met1–Gln17. The 101-residue stretch at Lys18–Arg118 folds into the Ig-like domain. The cysteines at positions 41 and 113 are disulfide-linked.

In terms of assembly, gamma-delta TR is a heterodimer composed of a gamma and delta chain; disulfide-linked. The gamma-delta TR is associated with the transmembrane signaling CD3 coreceptor proteins following the stoichiometry: a single gamma-delta TR heterodimer associates with one CD3D-CD3E heterodimer, one CD3G-CD3E heterodimer and one CD247 homodimer forming a stable octameric structure. Upon activation, gamma-delta TR complex associates with FCER1G to initiate intracellular signaling.

The protein localises to the cell membrane. Its function is as follows. V region of the variable domain of T cell receptor (TR) gamma chain that participates in the antigen recognition. Gamma-delta TRs recognize a variety of self and foreign non-peptide antigens frequently expressed at the epithelial boundaries between the host and external environment, including endogenous lipids presented by MH-like protein CD1D and phosphoantigens presented by butyrophilin-like molecule BTN3A1. Upon antigen recognition induces rapid, innate-like immune responses involved in pathogen clearance and tissue repair. Binding of gamma-delta TR complex to antigen triggers phosphorylation of immunoreceptor tyrosine-based activation motifs (ITAMs) in the CD3 chains by the LCK and FYN kinases, allowing the recruitment, phosphorylation, and activation of ZAP70 that facilitates phosphorylation of the scaffolding proteins LCP2 and LAT. This lead to the formation of a supramolecular signalosome that recruits the phospholipase PLCG1, resulting in calcium mobilization and ERK activation, ultimately leading to T cell expansion and differentiation into effector cells. Gamma-delta TRs are produced through somatic rearrangement of a limited repertoire of variable (V), diversity (D), and joining (J) genes. The potential diversity of gamma-delta TRs is conferred by the unique ability to rearrange (D) genes in tandem and to utilize all three reading frames. The combinatorial diversity is considerably increased by the sequence exonuclease trimming and random nucleotide (N) region additions which occur during the V-(D)-J rearrangements. The protein is T cell receptor gamma variable 8 of Homo sapiens (Human).